The following is a 251-amino-acid chain: Probable transcriptional regulatory protein Swol_1435 (251 aa).

The interval 1–23 (MAGHSKWANIKHKKARSDEKRGK) is disordered.

It belongs to the TACO1 family.

The protein localises to the cytoplasm. The sequence is that of Probable transcriptional regulatory protein Swol_1435 from Syntrophomonas wolfei subsp. wolfei (strain DSM 2245B / Goettingen).